The following is a 269-amino-acid chain: Acyl-CoA-binding domain-containing protein 4 (269 aa).

The ACB domain occupies 12-101 (CQKQFQAAVS…MKLVAQKVID (90 aa)). Residues 23-32 (IQNLPKNGSY), 43-47 (YSYYK), lysine 69, and tyrosine 88 contribute to the an acyl-CoA site. Disordered regions lie at residues 150 to 175 (GAVS…PRDL), 195 to 226 (EQRA…QCSA), and 248 to 269 (VALP…SAAN). Pro residues predominate over residues 156 to 167 (PCLPKEPAPPSP). Phosphoserine is present on residues serine 166 and serine 171.

Binds medium- and long-chain acyl-CoA esters and may function as an intracellular carrier of acyl-CoA esters. The polypeptide is Acyl-CoA-binding domain-containing protein 4 (ACBD4) (Pongo abelii (Sumatran orangutan)).